The primary structure comprises 156 residues: Non-structural protein 2 (156 aa).

The protein belongs to the pneumovirus non-structural protein 2 family.

It is found in the host cytoplasm. Functionally, plays a major role in antagonizing the type I IFN-mediated antiviral response. May also inhibit viral transcription and RNA replication. The chain is Non-structural protein 2 (1B) from Mus musculus (Mouse).